We begin with the raw amino-acid sequence, 349 residues long: MSRVKVAVLGATGSVGQRFIQLLDHHPFFEVTHLCASENSAGKTYGEVMKTRWKISSDIPAYAKNLVITTPDPAKTKDVVLAFSGLDSNVAGEVEKNYANAGIHIISNSKNHRMDPTVPILSAEVNSSHLEVLTSQKTKGKIITNSNCTIMGVTISLKPLLDRFGIESVMLFSMQAISGAGYPGVPTMDILGNVIPHIGGEEEKAEIEPLKCLGKVENGKILHADFSISAHCNRVPVFDGHTVCVSVKFKKKPSREEIISSWKDFSGEPQTLGLPLAPNPVILFREEEDRPQPRLDLDTGKGMTTVIGRLRPDPILDWKYVVLSHNTIRGAAGAALLNAELLYKKKFLG.

Residues 12–15 (TGSV) and 39–40 (NS) each bind NADP(+). Arginine 113 lines the phosphate pocket. Cysteine 148 (acyl-thioester intermediate) is an active-site residue. Substrate is bound at residue glutamine 175. 178–179 (SG) is a binding site for NADP(+). Glutamate 201 contacts substrate. Lysine 204 contributes to the phosphate binding site. Substrate is bound at residue arginine 234. The Proton acceptor role is filled by histidine 241. An NADP(+)-binding site is contributed by 326 to 327 (NT).

The protein belongs to the aspartate-semialdehyde dehydrogenase family. Homodimer.

The enzyme catalyses L-aspartate 4-semialdehyde + phosphate + NADP(+) = 4-phospho-L-aspartate + NADPH + H(+). The protein operates within amino-acid biosynthesis; L-lysine biosynthesis via DAP pathway; (S)-tetrahydrodipicolinate from L-aspartate: step 2/4. Its pathway is amino-acid biosynthesis; L-methionine biosynthesis via de novo pathway; L-homoserine from L-aspartate: step 2/3. It functions in the pathway amino-acid biosynthesis; L-threonine biosynthesis; L-threonine from L-aspartate: step 2/5. In terms of biological role, catalyzes the NADPH-dependent formation of L-aspartate-semialdehyde (L-ASA) by the reductive dephosphorylation of L-aspartyl-4-phosphate. The protein is Aspartate-semialdehyde dehydrogenase of Leptospira interrogans serogroup Icterohaemorrhagiae serovar Lai (strain 56601).